The chain runs to 415 residues: Thyroxine-binding globulin (415 aa).

An N-terminal signal peptide occupies residues Met-1–Cys-20. Residues Asn-36, Asn-99, Asn-165, and Asn-253 are each glycosylated (N-linked (GlcNAc...) asparagine). Residues Asn-293 and Arg-398 each contribute to the thyroxine site.

Belongs to the serpin family.

The protein localises to the secreted. Its function is as follows. Major thyroid hormone transport protein in serum. The chain is Thyroxine-binding globulin (SERPINA7) from Pan troglodytes (Chimpanzee).